A 251-amino-acid chain; its full sequence is MSDANNTAGDANEVNPEKDLSAENLPGQRGQGGEEIRVQRGMFGANNGGDTSGYGGLVRSVRLPGPASRPYGGWFDEVADELEGALEEQGLLPDNAIEKTVVDRGELTFHIEREHLVRVARTLRDDPALRFELCTGVSGVHYPHDKGRELHAVYHLRSITHNRLIRLEVSAPDGDPHIPSLVSVYPTNDWHERETYDFFGIVFDDHPALTRIMMPDDWQGFPQRKDYPLGGIPVEYKGAQIPAPDQRRSYS.

The interval 1 to 34 (MSDANNTAGDANEVNPEKDLSAENLPGQRGQGGE) is disordered.

This sequence belongs to the complex I 30 kDa subunit family. In terms of assembly, NDH-1 is composed of 14 different subunits. Subunits NuoB, C, D, E, F, and G constitute the peripheral sector of the complex.

The protein localises to the cell membrane. It catalyses the reaction a quinone + NADH + 5 H(+)(in) = a quinol + NAD(+) + 4 H(+)(out). Functionally, NDH-1 shuttles electrons from NADH, via FMN and iron-sulfur (Fe-S) centers, to quinones in the respiratory chain. The immediate electron acceptor for the enzyme in this species is believed to be a menaquinone. Couples the redox reaction to proton translocation (for every two electrons transferred, four hydrogen ions are translocated across the cytoplasmic membrane), and thus conserves the redox energy in a proton gradient. In Streptomyces coelicolor (strain ATCC BAA-471 / A3(2) / M145), this protein is NADH-quinone oxidoreductase subunit C.